A 427-amino-acid polypeptide reads, in one-letter code: Peptidase B (427 aa).

Residues Lys195 and Asp200 each coordinate Mn(2+). Lys207 is an active-site residue. The Mn(2+) site is built by Asp218, Asp277, and Glu279. Arg281 is a catalytic residue.

Belongs to the peptidase M17 family. In terms of assembly, homohexamer. Mn(2+) serves as cofactor.

It localises to the cytoplasm. It catalyses the reaction Release of an N-terminal amino acid, Xaa, from a peptide or arylamide. Xaa is preferably Glu or Asp but may be other amino acids, including Leu, Met, His, Cys and Gln.. Probably plays an important role in intracellular peptide degradation. This Escherichia coli O157:H7 protein is Peptidase B.